A 72-amino-acid chain; its full sequence is MTKEEAIEVDGVVKEALPNTTFRVQLQNGHEILAYLSGRMRKHYIRIVPGDSVKVALSPYDLSRGRIMFRER.

In terms of domain architecture, S1-like spans 1-72 (MTKEEAIEVD…SRGRIMFRER (72 aa)).

This sequence belongs to the IF-1 family. Component of the 30S ribosomal translation pre-initiation complex which assembles on the 30S ribosome in the order IF-2 and IF-3, IF-1 and N-formylmethionyl-tRNA(fMet); mRNA recruitment can occur at any time during PIC assembly.

Its subcellular location is the cytoplasm. One of the essential components for the initiation of protein synthesis. Stabilizes the binding of IF-2 and IF-3 on the 30S subunit to which N-formylmethionyl-tRNA(fMet) subsequently binds. Helps modulate mRNA selection, yielding the 30S pre-initiation complex (PIC). Upon addition of the 50S ribosomal subunit IF-1, IF-2 and IF-3 are released leaving the mature 70S translation initiation complex. The sequence is that of Translation initiation factor IF-1 from Treponema pallidum (strain Nichols).